Here is a 116-residue protein sequence, read N- to C-terminus: Large ribosomal subunit protein bL20 (116 aa).

Belongs to the bacterial ribosomal protein bL20 family.

Binds directly to 23S ribosomal RNA and is necessary for the in vitro assembly process of the 50S ribosomal subunit. It is not involved in the protein synthesizing functions of that subunit. This chain is Large ribosomal subunit protein bL20 (rplT), found in Helicobacter pylori (strain ATCC 700392 / 26695) (Campylobacter pylori).